A 390-amino-acid chain; its full sequence is 1-acyl-sn-glycerol-3-phosphate acyltransferase 2 (390 aa).

Residues 2–22 traverse the membrane as a helical segment; sequence AMAAAVIVPLGILFFISGLVV. An HXXXXD motif motif is present at residues 91-96; it reads HRSDID. Transmembrane regions (helical) follow at residues 305–325 and 333–353; these read LAVV…FLHW and KGIA…QILI. The interval 358 to 390 is disordered; it reads SERSTPAKVAPAKPKDNHQSGPSSQTEVEEKQK.

The protein belongs to the 1-acyl-sn-glycerol-3-phosphate acyltransferase family.

The protein resides in the endoplasmic reticulum membrane. The enzyme catalyses a 1-acyl-sn-glycero-3-phosphate + an acyl-CoA = a 1,2-diacyl-sn-glycero-3-phosphate + CoA. It participates in phospholipid metabolism; CDP-diacylglycerol biosynthesis; CDP-diacylglycerol from sn-glycerol 3-phosphate: step 2/3. Converts lysophosphatidic acid (LPA) into phosphatidic acid by incorporating acyl moiety at the 2 position. The polypeptide is 1-acyl-sn-glycerol-3-phosphate acyltransferase 2 (LPAT2) (Brassica napus (Rape)).